The primary structure comprises 508 residues: Histidine ammonia-lyase (508 aa).

Positions 139–141 form a cross-link, 5-imidazolinone (Ala-Gly); the sequence is ASG. Position 140 is a 2,3-didehydroalanine (Ser) (serine 140).

Belongs to the PAL/histidase family. In terms of processing, contains an active site 4-methylidene-imidazol-5-one (MIO), which is formed autocatalytically by cyclization and dehydration of residues Ala-Ser-Gly.

It is found in the cytoplasm. The enzyme catalyses L-histidine = trans-urocanate + NH4(+). The protein operates within amino-acid degradation; L-histidine degradation into L-glutamate; N-formimidoyl-L-glutamate from L-histidine: step 1/3. This chain is Histidine ammonia-lyase, found in Acidiphilium cryptum (strain JF-5).